Consider the following 965-residue polypeptide: Probable ion channel POLLUX (965 aa).

The segment covering 1 to 11 has biased composition (low complexity); it reads MAESDGGEASP. Disordered stretches follow at residues 1 to 76 and 108 to 158; these read MAES…APRG and GPHA…KSLA. Positions 32-42 are enriched in polar residues; sequence LTKSRTISGSA. Composition is skewed to low complexity over residues 52–66 and 118–149; these read SNSS…SSTA and RSQQ…ASVS. The next 4 helical transmembrane spans lie at 187 to 207, 251 to 271, 317 to 337, and 369 to 389; these read LSPY…LAIW, ADWN…VFLV, LALL…LYVV, and IVSV…LGLV. RCK N-terminal domains follow at residues 410–551 and 670–818; these read VNHI…ETVV and PEKI…DKSI.

Belongs to the castor/pollux (TC 1.A.1.23) family. As to expression, expressed in roots, leaves, stems and panicles.

It localises to the nucleus membrane. Functionally, required for mycorrhizal symbiosis. This is Probable ion channel POLLUX from Oryza sativa subsp. japonica (Rice).